Here is a 153-residue protein sequence, read N- to C-terminus: Transcriptional repressor NrdR (153 aa).

A zinc finger spans residues Cys3–Cys34. One can recognise an ATP-cone domain in the interval Ile49 to Thr139.

This sequence belongs to the NrdR family. Zn(2+) serves as cofactor.

Its function is as follows. Negatively regulates transcription of bacterial ribonucleotide reductase nrd genes and operons by binding to NrdR-boxes. This Caldicellulosiruptor saccharolyticus (strain ATCC 43494 / DSM 8903 / Tp8T 6331) protein is Transcriptional repressor NrdR.